The sequence spans 371 residues: 4-hydroxybutyrate dehydrogenase (371 aa).

NAD(+)-binding positions include 88–92 (GSVID), 126–130 (TTCGT), and K148. Residues D182, H186, H253, and H267 each contribute to the Fe cation site. Residue H267 participates in NAD(+) binding.

It belongs to the iron-containing alcohol dehydrogenase family. As to quaternary structure, homodimer. Fe(2+) is required as a cofactor. The cofactor is Cu(2+).

It catalyses the reaction 4-hydroxybutanoate + NAD(+) = succinate semialdehyde + NADH + H(+). Inactivated by oxygen. Functionally, involved in the anaerobic succinate degradation pathway. Catalyzes the interconversion of gamma-hydroxybutyrate (GHB) and succinic semialdehyde (SSA). This is 4-hydroxybutyrate dehydrogenase from Clostridium kluyveri (strain ATCC 8527 / DSM 555 / NBRC 12016 / NCIMB 10680 / K1).